The chain runs to 75 residues: Large ribosomal subunit protein bL28 (75 aa).

It belongs to the bacterial ribosomal protein bL28 family.

The protein is Large ribosomal subunit protein bL28 of Buchnera aphidicola subsp. Acyrthosiphon pisum (strain 5A).